A 110-amino-acid chain; its full sequence is UPF0122 protein YlxM (110 aa).

It belongs to the UPF0122 family.

Functionally, might take part in the signal recognition particle (SRP) pathway. This is inferred from the conservation of its genetic proximity to ftsY/ffh. May be a regulatory protein. The protein is UPF0122 protein YlxM (ylxM) of Bacillus subtilis (strain 168).